A 1032-amino-acid chain; its full sequence is Phosphoenolpyruvate carboxylase 4 (1032 aa).

Residue histidine 154 is part of the active site. The segment at 377-407 (PNLQKQNEQDFSESDWEKIDNGSRSGLTSRG) is disordered. Residues 398–407 (GSRSGLTSRG) are compositionally biased toward polar residues. Lysine 699 is an active-site residue.

The protein belongs to the PEPCase type 1 family. Homotetramer. The cofactor is Mg(2+). In terms of tissue distribution, expressed at low levels in flowers and siliques, and detectable in roots.

The protein resides in the cytoplasm. It catalyses the reaction oxaloacetate + phosphate = phosphoenolpyruvate + hydrogencarbonate. Its function is as follows. Through the carboxylation of phosphoenolpyruvate (PEP) it forms oxaloacetate, a four-carbon dicarboxylic acid source for the tricarboxylic acid cycle. The polypeptide is Phosphoenolpyruvate carboxylase 4 (PPC4) (Arabidopsis thaliana (Mouse-ear cress)).